Here is a 633-residue protein sequence, read N- to C-terminus: Laccase ARB_05828 (633 aa).

The first 16 residues, 1-16 (MKRLGLAALYIGSALA), serve as a signal peptide directing secretion. A propeptide spanning residues 22-47 (GPPSRNVPRDDFPMFNPLPSTDLNTR) is cleaved from the precursor. A glycan (N-linked (GlcNAc...) asparagine) is linked at N143. 4 residues coordinate Cu cation: H148, H150, H192, and H194. A disulfide bond links C169 and C607. Residues 224–353 (LLMTDHLHSS…GRYWVRTTPA (130 aa)) form the Plastocyanin-like domain. Residues N286 and N456 are each glycosylated (N-linked (GlcNAc...) asparagine). The Cu cation site is built by H508, H511, H513, H568, C569, H570, and H574.

Belongs to the multicopper oxidase family. As to quaternary structure, monomer. Requires Cu cation as cofactor.

It is found in the secreted. The enzyme catalyses 4 hydroquinone + O2 = 4 benzosemiquinone + 2 H2O. This Arthroderma benhamiae (strain ATCC MYA-4681 / CBS 112371) (Trichophyton mentagrophytes) protein is Laccase ARB_05828.